We begin with the raw amino-acid sequence, 155 residues long: SsrA-binding protein (155 aa).

The span at Thr-135–Lys-147 shows a compositional bias: basic and acidic residues. The disordered stretch occupies residues Thr-135 to Arg-155.

It belongs to the SmpB family.

Its subcellular location is the cytoplasm. In terms of biological role, required for rescue of stalled ribosomes mediated by trans-translation. Binds to transfer-messenger RNA (tmRNA), required for stable association of tmRNA with ribosomes. tmRNA and SmpB together mimic tRNA shape, replacing the anticodon stem-loop with SmpB. tmRNA is encoded by the ssrA gene; the 2 termini fold to resemble tRNA(Ala) and it encodes a 'tag peptide', a short internal open reading frame. During trans-translation Ala-aminoacylated tmRNA acts like a tRNA, entering the A-site of stalled ribosomes, displacing the stalled mRNA. The ribosome then switches to translate the ORF on the tmRNA; the nascent peptide is terminated with the 'tag peptide' encoded by the tmRNA and targeted for degradation. The ribosome is freed to recommence translation, which seems to be the essential function of trans-translation. This is SsrA-binding protein from Streptococcus pyogenes serotype M12 (strain MGAS2096).